A 443-amino-acid chain; its full sequence is UDP-N-acetylmuramate--L-alanine ligase (443 aa).

110-116 contacts ATP; that stretch reads GAHGKTS.

The protein belongs to the MurCDEF family.

The protein resides in the cytoplasm. It catalyses the reaction UDP-N-acetyl-alpha-D-muramate + L-alanine + ATP = UDP-N-acetyl-alpha-D-muramoyl-L-alanine + ADP + phosphate + H(+). Its pathway is cell wall biogenesis; peptidoglycan biosynthesis. Functionally, cell wall formation. The chain is UDP-N-acetylmuramate--L-alanine ligase from Streptococcus equi subsp. zooepidemicus (strain MGCS10565).